Reading from the N-terminus, the 426-residue chain is Trigger factor (426 aa).

One can recognise a PPIase FKBP-type domain in the interval 166–249 (GDIVTFDFKG…IIEVKARELP (84 aa)).

Belongs to the FKBP-type PPIase family. Tig subfamily.

The protein resides in the cytoplasm. The enzyme catalyses [protein]-peptidylproline (omega=180) = [protein]-peptidylproline (omega=0). Its function is as follows. Involved in protein export. Acts as a chaperone by maintaining the newly synthesized protein in an open conformation. Functions as a peptidyl-prolyl cis-trans isomerase. This Mesoplasma florum (strain ATCC 33453 / NBRC 100688 / NCTC 11704 / L1) (Acholeplasma florum) protein is Trigger factor.